The primary structure comprises 585 residues: Chaperonin GroEL, chloroplastic (585 aa).

ATP is bound by residues 55–58 (TLGP), 113–117 (DGTTT), glycine 442, 507–509 (NAA), and aspartate 523.

It belongs to the chaperonin (HSP60) family. As to quaternary structure, forms a cylinder of 14 subunits composed of two heptameric rings stacked back-to-back. Interacts with the co-chaperonin GroES.

The protein resides in the plastid. The protein localises to the chloroplast. The enzyme catalyses ATP + H2O + a folded polypeptide = ADP + phosphate + an unfolded polypeptide.. In terms of biological role, together with its co-chaperonin GroES, plays an essential role in assisting protein folding. The GroEL-GroES system forms a nano-cage that allows encapsulation of the non-native substrate proteins and provides a physical environment optimized to promote and accelerate protein folding. This chain is Chaperonin GroEL, chloroplastic, found in Pyrenomonas salina.